The following is a 273-amino-acid chain: Putative phosphoenolpyruvate synthase regulatory protein (273 aa).

Glycine 154–threonine 161 provides a ligand contact to ADP.

It belongs to the pyruvate, phosphate/water dikinase regulatory protein family. PSRP subfamily.

It catalyses the reaction [pyruvate, water dikinase] + ADP = [pyruvate, water dikinase]-phosphate + AMP + H(+). The enzyme catalyses [pyruvate, water dikinase]-phosphate + phosphate + H(+) = [pyruvate, water dikinase] + diphosphate. Functionally, bifunctional serine/threonine kinase and phosphorylase involved in the regulation of the phosphoenolpyruvate synthase (PEPS) by catalyzing its phosphorylation/dephosphorylation. This chain is Putative phosphoenolpyruvate synthase regulatory protein, found in Neisseria meningitidis serogroup C (strain 053442).